Reading from the N-terminus, the 160-residue chain is Nucleotide-binding protein Tola_0795 (160 aa).

This sequence belongs to the YajQ family.

In terms of biological role, nucleotide-binding protein. This chain is Nucleotide-binding protein Tola_0795, found in Tolumonas auensis (strain DSM 9187 / NBRC 110442 / TA 4).